We begin with the raw amino-acid sequence, 433 residues long: Casein kinase 1-like protein 5 (433 aa).

A Protein kinase domain is found at 9–278 (FRLGRKIGSG…LKRLFRNLFI (270 aa)). ATP contacts are provided by residues 15 to 23 (IGSGSFGEI) and K38. D128 serves as the catalytic Proton acceptor. The segment at 297-433 (QSQSGNPQPR…DDVEPQSKAL (137 aa)) is disordered. Positions 342–359 (LKQKDKNGNDSAIAKDKL) are enriched in basic and acidic residues. Residues 362-375 (GSLNLGRSEGSSSR) are compositionally biased toward low complexity. Phosphoserine is present on S390. The segment covering 407 to 423 (INNNAGDETAATPQSNG) has biased composition (polar residues).

The protein belongs to the protein kinase superfamily. CK1 Ser/Thr protein kinase family. Casein kinase I subfamily. As to quaternary structure, monomer. Autophosphorylated.

The protein resides in the cytoplasm. It catalyses the reaction L-seryl-[protein] + ATP = O-phospho-L-seryl-[protein] + ADP + H(+). The catalysed reaction is L-threonyl-[protein] + ATP = O-phospho-L-threonyl-[protein] + ADP + H(+). In terms of biological role, casein kinases are operationally defined by their preferential utilization of acidic proteins such as caseins as substrates. It can phosphorylate a large number of proteins. The protein is Casein kinase 1-like protein 5 of Arabidopsis thaliana (Mouse-ear cress).